The following is a 1016-amino-acid chain: MAESSDKLYRVEYAKSGRASCKKCKESIPKDSIRMAFMVESPMFDGKIPHWYHLSCFWKVGFSIWHPDVEVEGFSELRWDDQQTIKKMAETGGRTDVSGKGQDGVGSKTEKTLIDFGAGYAKSNRSTCKSCMEKIDKGQVRLSKKVVYPDKPQLGMVDCWYHPKCFVQKREELGFRPEFSATHLMGFSVLTAEDQETLKKQLPAIKGERKRKGDEVDGIDEVTKKKSKKEKDKEIKLEKALKAQNDLIWNVKDELKKACSTNDLKELLIFNKQEVPSGESAILDRVADGMVFGALLPCEECSGQLVFKGDAYYCTGDVTAWTKCMVKTQTPNRKEWVTPKEFREISYFKKLKIKKQDRIFPPESSTPVGAAAPPSAASAPAAVHSGPPDKPLSNMKILTLGKLSQNKDEVKATIEKLGGKLTGTANKASLCISTKKEVDKLNKKMEEVKEANIRVVSEDFLQDISASTKSLQELLSTHLLSPWGAEVKVEPVEAVGPKGKSGAAPSKKSKGPVKEEGTNKSEKRMKLTLKGGAAVDPDSGLEHNAHVLEKGGKVFSATLGLVDIVKGTNSYYKLQLLEDDKESRYWIFRSWGRVGTVIGSNKLEQMPSKEDAIEHFMKLYEEKTGNAWHSKNFTKHPKKFYPLEIDYGQDEEAVKKLTVNPGTKSKLPKPVQNLIKMIFDVESMKKAMVEYEIDLQKMPLGKLSKRQIQAAYSILSEVQQALSQGSSDSHILDLSNRFYTLIPHDFGMKKPPLLNNANSVQAKVEMLDNLLDIEVAYSLLRGGSDDSSKDPIDVNYEKLKTDIKVVDKDSEEAEIIRKYVKNTHATTHNAYDLEVVDIFKIEREGESQRYKPFKQLHNRRLLWHGSRTTNFAGILSQGLRIAPPEAPVTGYMFGKGIYFADMVSKSANYCHTSQGDPIGLILLGEAALGNMYELKHARHISKLPKGKHSVKGLGKTTPDPSASITVDGVEVPLGTGISSGVNDTCLLYNEYIVYDIAQVHLKYLLKLKFNFKTSLW.

Ala-2 carries the post-translational modification N-acetylalanine. Residues 9 to 93 (YRVEYAKSGR…TIKKMAETGG (85 aa)) form a PARP-type 1 zinc finger. Positions 21 and 24 each coordinate Zn(2+). Ser-41 bears the Phosphoserine mark. Positions 53 and 56 each coordinate Zn(2+). An N6-acetyllysine mark is found at Lys-100 and Lys-108. The PARP-type 2 zinc-finger motif lies at 116-206 (FGAGYAKSNR…TLKKQLPAIK (91 aa)). Residues Cys-128 and Cys-131 each contribute to the Zn(2+) site. At Lys-134 the chain carries N6-acetyllysine. Zn(2+) is bound by residues His-162 and Cys-165. Phosphoserine is present on residues Ser-180 and Ser-188. A Glycyl lysine isopeptide (Lys-Gly) (interchain with G-Cter in SUMO1); alternate cross-link involves residue Lys-206. A Glycyl lysine isopeptide (Lys-Gly) (interchain with G-Cter in SUMO2); alternate cross-link involves residue Lys-206. 2 short sequence motifs (nuclear localization signal) span residues 210 to 212 (KRK) and 224 to 229 (KKKSKK). The 135-residue stretch at 228 to 362 (KKEKDKEIKL…IKKQDRIFPP (135 aa)) folds into the PADR1 zinc-binding domain. Lys-252 participates in a covalent cross-link: Glycyl lysine isopeptide (Lys-Gly) (interchain with G-Cter in SUMO2). A phosphoserine mark is found at Ser-277 and Ser-280. The zinc ribbon stretch occupies residues 293–335 (GALLPCEECSGQLVFKGDAYYCTGDVTAWTKCMVKTQTPNRKE). Residues Cys-298, Cys-301, Cys-314, and Cys-324 each contribute to the Zn(2+) site. A disordered region spans residues 360–390 (FPPESSTPVGAAAPPSAASAPAAVHSGPPDK). Residues 365–386 (STPVGAAAPPSAASAPAAVHSG) are compositionally biased toward low complexity. The segment at 376–526 (AASAPAAVHS…GTNKSEKRMK (151 aa)) is automodification domain. Residues 387-478 (PPDKPLSNMK…KSLQELLSTH (92 aa)) form the BRCT domain. Position 389 is a polyADP-ribosyl aspartic acid (Asp-389). PolyADP-ribosyl glutamic acid occurs at positions 409, 415, 437, 446, 447, 450, and 458. A Glycyl lysine isopeptide (Lys-Gly) (interchain with G-Cter in SUMO2) cross-link involves residue Lys-469. 2 positions are modified to polyADP-ribosyl glutamic acid: Glu-473 and Glu-486. Lys-488 is covalently cross-linked (Glycyl lysine isopeptide (Lys-Gly) (interchain with G-Cter in SUMO1); alternate). A Glycyl lysine isopeptide (Lys-Gly) (interchain with G-Cter in SUMO2); alternate cross-link involves residue Lys-488. PolyADP-ribosyl glutamic acid is present on residues Glu-490 and Glu-493. Residues 494–523 (AVGPKGKSGAAPSKKSKGPVKEEGTNKSEK) are disordered. The segment covering 496–506 (GPKGKSGAAPS) has biased composition (low complexity). ADP-ribosylserine occurs at positions 501, 506, and 509. Basic and acidic residues predominate over residues 512–523 (PVKEEGTNKSEK). Lys-514 participates in a covalent cross-link: Glycyl lysine isopeptide (Lys-Gly) (interchain with G-Cter in SUMO2). A polyADP-ribosyl glutamic acid mark is found at Glu-515 and Glu-516. Residue Ser-521 is modified to ADP-ribosylserine. Glu-522 carries the polyADP-ribosyl glutamic acid modification. Lys-523 carries the N6-(ADP-ribosyl)lysine modification. Residue Lys-530 forms a Glycyl lysine isopeptide (Lys-Gly) (interchain with G-Cter in SUMO2) linkage. The WGR domain maps to 544 to 640 (NAHVLEKGGK…KNFTKHPKKF (97 aa)). At Thr-596 the chain carries Phosphothreonine. Residues Lys-602 and Lys-623 each carry the N6-acetyllysine modification. The PARP alpha-helical domain maps to 664–781 (KSKLPKPVQN…DIEVAYSLLR (118 aa)). Lys-750 is covalently cross-linked (Glycyl lysine isopeptide (Lys-Gly) (interchain with G-Cter in SUMO1); alternate). Lys-750 is covalently cross-linked (Glycyl lysine isopeptide (Lys-Gly) (interchain with G-Cter in SUMO2); alternate). Phosphoserine occurs at positions 784 and 788. The region spanning 790 to 1016 (DPIDVNYEKL…LKFNFKTSLW (227 aa)) is the PARP catalytic domain. Residues 864–866 (HGS), Gly-873, Arg-880, and Ser-906 each bind NAD(+). Residue Glu-990 is the For poly [ADP-ribose] polymerase activity of the active site.

This sequence belongs to the ARTD/PARP family. As to quaternary structure, homodimer; PARP-type zinc-fingers from separate PARP1 molecules form a dimer module that specifically recognizes DNA strand breaks. Heterodimer; heterodimerizes with PARP2. Interacts (via the PARP catalytic domain) with HPF1. Interacts with NMNAT1. Interacts with nucleosomes; with a preference for nucleosomes containing H2A.X. Interacts with APTX. Component of a base excision repair (BER) complex, containing at least XRCC1, PARP1, PARP2, POLB and LRIG3. Interacts with SRY. The SWAP complex consists of NPM1, NCL, PARP1 and SWAP70. Interacts with TIAM2. Interacts with PARP3; leading to activate PARP1 in absence of DNA. Interacts (when poly-ADP-ribosylated) with CHD1L (via macro domain). Interacts with the DNA polymerase alpha catalytic subunit POLA1; this interaction functions as part of the control of replication fork progression. Interacts with EEF1A1 and TXK. Interacts with RNF4. Interacts with RNF146. Interacts with ZNF423. Interacts with APLF. Interacts with SNAI1 (via zinc fingers); the interaction requires SNAI1 to be poly-ADP-ribosylated and non-phosphorylated (active) by GSK3B. Interacts (when poly-ADP-ribosylated) with PARP9. Interacts with NR4A3; activates PARP1 by improving acetylation of PARP1 and suppressing the interaction between PARP1 and SIRT1. Interacts (via catalytic domain) with PUM3; the interaction inhibits the poly-ADP-ribosylation activity of PARP1 and the degradation of PARP1 by CASP3 following genotoxic stress. Interacts with ZNF365. Interacts with RRP1B. Interacts with TIMELESS; the interaction is direct. Interacts with CGAS; leading to impede the formation of the PARP1-TIMELESS complex. Interacts with KHDC3L, the interaction is increased following the formation of DNA double-strand breaks. Interacts (when auto-poly-ADP-ribosylated) with XRCC1; leading to inhibit PARP1 ADP-ribosyltransferase activity. Interacts with SPINDOC; promoting PARP1 ADP-ribosyltransferase activity. Interacts with BANF1; leading to inhibit PARP1 ADP-ribosyltransferase activity in response to oxidative DNA damage. Interacts (when sumoylated and ubiquitinated) with VCP/p97; leading to its extraction from chromatin. Interacts with YARS1; promoting PARP1 ADP-ribosyltransferase activity. Interacts with PACMP micropeptide; Interacts with PACMP micropeptide; interaction. Interacts (when poly-ADP-ribosylated) with isoform 1 of MACROH2A1; MACROH2A1 specifically binds to poly-ADP-ribose chains and inhibits PARP1 activity, limiting the consumption of nuclear NAD(+). Interacts with CARM1; promoting recruitment to replication forks. Interacts with RECQL. Interacts with ZNF32; the interaction reshapes ZNF432 interacting proteins. Interacts with TPRN; TPRN interacts with a number of DNA damage response proteins, is recruited to sites of DNA damage and may play a role in DNA damage repair. In terms of assembly, interacts (when auto-poly-ADP-ribosylated) with AIFM1. Post-translationally, poly-ADP-ribosylated on serine, glutamate and aspartate residues by autocatalysis. Auto-ADP-ribosylation on serine takes place following interaction with HPF1. Auto poly-ADP-ribosylation on serine residues promotes its dissociation from chromatin. Poly-ADP-ribosylated by PARP2; poly-ADP-ribosylation mediates the recruitment of CHD1L to DNA damage sites. Mono-ADP-ribosylated at Lys-523 by SIRT6 in response to oxidative stress, promoting recruitment to double-strand breaks (DSBs) sites. S-nitrosylated, leading to inhibit transcription regulation activity. In terms of processing, phosphorylated at Thr-596 by PRKDC in response to DNA damage following virus infection, promoting its translocation to the cytosol. Phosphorylated by TXK. Post-translationally, proteolytically cleaved by caspase-3 (CASP3) and caspase-7 (CASP7) in response to apoptosis to generate the Poly [ADP-ribose] polymerase 1, processed N-terminus and Poly [ADP-ribose] polymerase 1, processed C-terminus forms. Sumoylated with SUMO1 or SUMO2 by PIAS4 following prolonged residence (trapping) to chromatin. Sumoylation promotes ubiquitination by RNF4 and removal from chromatin by VCP/p97. In terms of processing, ubiquitinated by RNF4 following sumoylation by PIAS4 in response to prolonged residence (trapping) to chromatin. Ubiquitination promotes removal from chromatin by VCP/p97.

The protein localises to the chromosome. Its subcellular location is the nucleus. The protein resides in the nucleolus. It localises to the cytoplasm. It is found in the cytosol. The enzyme catalyses NAD(+) + (ADP-D-ribosyl)n-acceptor = nicotinamide + (ADP-D-ribosyl)n+1-acceptor + H(+).. The catalysed reaction is L-seryl-[protein] + NAD(+) = O-(ADP-D-ribosyl)-L-seryl-[protein] + nicotinamide + H(+). It carries out the reaction L-aspartyl-[protein] + NAD(+) = 4-O-(ADP-D-ribosyl)-L-aspartyl-[protein] + nicotinamide. It catalyses the reaction L-glutamyl-[protein] + NAD(+) = 5-O-(ADP-D-ribosyl)-L-glutamyl-[protein] + nicotinamide. The enzyme catalyses L-tyrosyl-[protein] + NAD(+) = O-(ADP-D-ribosyl)-L-tyrosyl-[protein] + nicotinamide + H(+). The catalysed reaction is L-histidyl-[protein] + NAD(+) = N(tele)-(ADP-D-ribosyl)-L-histidyl-[protein] + nicotinamide + H(+). With respect to regulation, ADP-ribosyltransferase activity is regulated via an allosteric activation mechanism. In absence of activation signal, PARP1 is autoinhibited by the PARP alpha-helical domain (also named HD region), which prevents effective NAD(+)-binding. Activity is highly stimulated by signals, such as DNA strand breaks. Binding to damaged DNA unfolds the PARP alpha-helical domain, relieving autoinhibition. Poly-ADP-ribosyltransferase activity is tightly regulated and PARP1 is removed from damaged chromatin following initial poly-ADP-ribosylation of chromatin to avoid prolonged residence (trapping) that has cytotoxic consequences. A number of factors (VCP/p97) or post-translational modifications (auto-poly-ADP-ribosylation or ubiquitination) promote PARP1 removal from chromatin. Its function is as follows. Poly-ADP-ribosyltransferase that mediates poly-ADP-ribosylation of proteins and plays a key role in DNA repair. Mediates glutamate, aspartate, serine, histidine or tyrosine ADP-ribosylation of proteins: the ADP-D-ribosyl group of NAD(+) is transferred to the acceptor carboxyl group of target residues and further ADP-ribosyl groups are transferred to the 2'-position of the terminal adenosine moiety, building up a polymer with an average chain length of 20-30 units. Serine ADP-ribosylation of proteins constitutes the primary form of ADP-ribosylation of proteins in response to DNA damage. Specificity for the different amino acids is conferred by interacting factors, such as HPF1 and NMNAT1. Following interaction with HPF1, catalyzes serine ADP-ribosylation of target proteins; HPF1 confers serine specificity by completing the PARP1 active site. Also catalyzes tyrosine ADP-ribosylation of target proteins following interaction with HPF1. Following interaction with NMNAT1, catalyzes glutamate and aspartate ADP-ribosylation of target proteins; NMNAT1 confers glutamate and aspartate specificity. PARP1 initiates the repair of DNA breaks: recognizes and binds DNA breaks within chromatin and recruits HPF1, licensing serine ADP-ribosylation of target proteins, such as histones (H2BS6ADPr and H3S10ADPr), thereby promoting decompaction of chromatin and the recruitment of repair factors leading to the reparation of DNA strand breaks. HPF1 initiates serine ADP-ribosylation but restricts the polymerase activity of PARP1 in order to limit the length of poly-ADP-ribose chains. In addition to base excision repair (BER) pathway, also involved in double-strand breaks (DSBs) repair: together with TIMELESS, accumulates at DNA damage sites and promotes homologous recombination repair by mediating poly-ADP-ribosylation. Mediates the poly-ADP-ribosylation of a number of proteins, including itself, APLF, CHFR and NFAT5. In addition to proteins, also able to ADP-ribosylate DNA: catalyzes ADP-ribosylation of DNA strand break termini containing terminal phosphates and a 2'-OH group in single- and double-stranded DNA, respectively. Required for PARP9 and DTX3L recruitment to DNA damage sites. PARP1-dependent PARP9-DTX3L-mediated ubiquitination promotes the rapid and specific recruitment of 53BP1/TP53BP1, UIMC1/RAP80, and BRCA1 to DNA damage sites. PARP1-mediated DNA repair in neurons plays a role in sleep: senses DNA damage in neurons and promotes sleep, facilitating efficient DNA repair. In addition to DNA repair, also involved in other processes, such as transcription regulation, programmed cell death, membrane repair, adipogenesis and innate immunity. Acts as a repressor of transcription: binds to nucleosomes and modulates chromatin structure in a manner similar to histone H1, thereby altering RNA polymerase II. Acts both as a positive and negative regulator of transcription elongation, depending on the context. Acts as a positive regulator of transcription elongation by mediating poly-ADP-ribosylation of NELFE, preventing RNA-binding activity of NELFE and relieving transcription pausing. Acts as a negative regulator of transcription elongation in response to DNA damage by catalyzing poly-ADP-ribosylation of CCNT1, disrupting the phase separation activity of CCNT1 and subsequent activation of CDK9. Involved in replication fork progression following interaction with CARM1: mediates poly-ADP-ribosylation at replication forks, slowing fork progression. Poly-ADP-ribose chains generated by PARP1 also play a role in poly-ADP-ribose-dependent cell death, a process named parthanatos. Also acts as a negative regulator of the cGAS-STING pathway. Acts by mediating poly-ADP-ribosylation of CGAS: PARP1 translocates into the cytosol following phosphorylation by PRKDC and catalyzes poly-ADP-ribosylation and inactivation of CGAS. Acts as a negative regulator of adipogenesis: catalyzes poly-ADP-ribosylation of histone H2B on 'Glu-35' (H2BE35ADPr) following interaction with NMNAT1, inhibiting phosphorylation of H2B at 'Ser-36' (H2BS36ph), thereby blocking expression of pro-adipogenetic genes. Involved in the synthesis of ATP in the nucleus, together with NMNAT1, PARG and NUDT5. Nuclear ATP generation is required for extensive chromatin remodeling events that are energy-consuming. Functionally, promotes AIFM1-mediated apoptosis. This form, which translocates into the cytoplasm following cleavage by caspase-3 (CASP3) and caspase-7 (CASP7) in response to apoptosis, is auto-poly-ADP-ribosylated and serves as a poly-ADP-ribose carrier to induce AIFM1-mediated apoptosis. This cleavage form irreversibly binds to DNA breaks and interferes with DNA repair, promoting DNA damage-induced apoptosis. The sequence is that of Poly [ADP-ribose] polymerase 1 (PARP1) from Bos taurus (Bovine).